Reading from the N-terminus, the 462-residue chain is Kinetochore protein Nuf2-A (462 aa).

2 coiled-coil regions span residues 143-277 (SSYK…DKCD) and 308-461 (EIHR…RLSR). The tract at residues 239 to 259 (RMKSQIVESPEQRKSKTERMK) is disordered. The span at 248–259 (PEQRKSKTERMK) shows a compositional bias: basic and acidic residues.

The protein belongs to the NUF2 family. In terms of assembly, component of the NDC80 complex, which is composed of ndc80, cdca1, spbc24 and spbc25. The NDC80 complex interacts with mis12 and zwint.

It localises to the nucleus. The protein localises to the chromosome. Its subcellular location is the centromere. The protein resides in the kinetochore. Its function is as follows. Acts as a component of the essential kinetochore-associated NDC80 complex, which is required for chromosome segregation and spindle checkpoint activity. Required for kinetochore integrity and the organization of stable microtubule binding sites in the outer plate of the kinetochore. The NDC80 complex synergistically enhances the affinity of the SKA1 complex for microtubules and may allow the NDC80 complex to track depolymerizing microtubules. This is Kinetochore protein Nuf2-A (nuf2-a) from Xenopus laevis (African clawed frog).